Reading from the N-terminus, the 253-residue chain is Thiamine import ATP-binding protein ThiQ (253 aa).

Residues 8–236 (VRLDKVSFSY…AGPEAFRRYI (229 aa)) enclose the ABC transporter domain. 38 to 45 (GPSGSGKS) contributes to the ATP binding site.

Belongs to the ABC transporter superfamily. Thiamine importer (TC 3.A.1.19.1) family. In terms of assembly, the complex is composed of two ATP-binding proteins (ThiQ), two transmembrane proteins (ThiP) and a solute-binding protein (ThiB).

It localises to the cell inner membrane. The enzyme catalyses thiamine(out) + ATP + H2O = thiamine(in) + ADP + phosphate + H(+). Its function is as follows. Part of the ABC transporter complex ThiBPQ involved in thiamine import. Responsible for energy coupling to the transport system. The protein is Thiamine import ATP-binding protein ThiQ of Mesorhizobium japonicum (strain LMG 29417 / CECT 9101 / MAFF 303099) (Mesorhizobium loti (strain MAFF 303099)).